A 526-amino-acid polypeptide reads, in one-letter code: Methyltetrahydroprotoberberine 14-monooxygenase (526 aa).

Residues 14–34 traverse the membrane as a helical segment; sequence LLLQYLQPISVALVVIALVWN. C468 provides a ligand contact to heme.

This sequence belongs to the cytochrome P450 family. Heme is required as a cofactor. Mainly expressed in roots, and barely in stems, leaves and carpels.

The protein resides in the membrane. It catalyses the reaction (S)-cis-N-methylcanadine + reduced [NADPH--hemoprotein reductase] + O2 = allocryptopine + oxidized [NADPH--hemoprotein reductase] + H2O + 2 H(+). The enzyme catalyses (S)-cis-N-methylstylopine + reduced [NADPH--hemoprotein reductase] + O2 = protopine + oxidized [NADPH--hemoprotein reductase] + H2O + 2 H(+). The catalysed reaction is (S)-cis-N-methyltetrahydrothalifendine + reduced [NADPH--hemoprotein reductase] + O2 = 7-hydroxy-8-methoxy-11-methyl-17,19-dioxa-11-azatetracyclo[12.7.0.0(4,9).0(16,20)]henicosa-1(21),4(9),5,7,14,16(20)-hexaen-2-one + oxidized [NADPH--hemoprotein reductase] + H2O + 2 H(+). It carries out the reaction (S)-cis-N-methyltetrahydropalmatine + reduced [NADPH--hemoprotein reductase] + O2 = muramine + oxidized [NADPH--hemoprotein reductase] + H2O + 2 H(+). Its pathway is alkaloid biosynthesis. With respect to regulation, repressed by cytochrome P450 inhibitors ketoconazole, metyrapone, prochloraz, ancymidol and cytochrome C. Functionally, involved in the biosynthesis of the isoquinoline alkaloid sanguinarine. Catalyzes the conversion of N-methylated protoberberine alkaloids N-methylstylopine and N-methylcanadine into protopine and allocryptopine, respectively. Can also use (S)-cis-N-methyltetrahydrothalifendine and (S)-cis-N-methyltetrahydropalmatine as substrates. In Papaver somniferum (Opium poppy), this protein is Methyltetrahydroprotoberberine 14-monooxygenase.